The primary structure comprises 211 residues: Small ribosomal subunit protein eS1 (211 aa).

Residues 192 to 211 (NGLPPYEAVGDRATPELASY) are disordered.

Belongs to the eukaryotic ribosomal protein eS1 family.

The chain is Small ribosomal subunit protein eS1 from Methanopyrus kandleri (strain AV19 / DSM 6324 / JCM 9639 / NBRC 100938).